The primary structure comprises 370 residues: Doublesex- and mab-3-related transcription factor C2 (370 aa).

The interval 1 to 38 (MDPSETAALHHCSADSSPADEARVPQSTELIPRRPVSR) is disordered. Positions 42–89 (CARCRNHGVTAHLKGHKRLCLFQACECHKCVLILERRRVMAAQVALRR) form a DNA-binding region, DM. Residues 334 to 356 (APPGGRGFQPVGPPLRPSPGSSV) are disordered.

Belongs to the DMRT family. As to expression, expressed in testis. Highly expressed in ovary.

The protein localises to the nucleus. In terms of biological role, may be involved in sexual development. The protein is Doublesex- and mab-3-related transcription factor C2 (Dmrtc2) of Mus musculus (Mouse).